Consider the following 196-residue polypeptide: Small ribosomal subunit protein uS4m (196 aa).

The 67-residue stretch at 88-154 (KRLDVILVRL…FKSNIRKNFQ (67 aa)) folds into the S4 RNA-binding domain.

The protein belongs to the universal ribosomal protein uS4 family.

It is found in the mitochondrion. In Marchantia polymorpha (Common liverwort), this protein is Small ribosomal subunit protein uS4m (RPS4).